We begin with the raw amino-acid sequence, 42 residues long: Photosystem I reaction center subunit IX (42 aa).

The chain crosses the membrane as a helical span at residues 7-27; the sequence is YLSVAPVLSTLWFGALAGLLI.

It belongs to the PsaJ family.

Its subcellular location is the plastid. The protein resides in the chloroplast thylakoid membrane. Its function is as follows. May help in the organization of the PsaE and PsaF subunits. This is Photosystem I reaction center subunit IX from Guizotia abyssinica (Niger).